Here is a 180-residue protein sequence, read N- to C-terminus: ATP-dependent protease subunit HslV (180 aa).

T7 is an active-site residue. Positions 165, 168, and 171 each coordinate Na(+).

This sequence belongs to the peptidase T1B family. HslV subfamily. In terms of assembly, a double ring-shaped homohexamer of HslV is capped on each side by a ring-shaped HslU homohexamer. The assembly of the HslU/HslV complex is dependent on binding of ATP.

It localises to the cytoplasm. The catalysed reaction is ATP-dependent cleavage of peptide bonds with broad specificity.. With respect to regulation, allosterically activated by HslU binding. Protease subunit of a proteasome-like degradation complex believed to be a general protein degrading machinery. The polypeptide is ATP-dependent protease subunit HslV (Geobacillus sp. (strain WCH70)).